The chain runs to 261 residues: Small ribosomal subunit protein uS2 (261 aa).

The tract at residues 224–261 (GKQGQDDSEDVEKEMADKAAAENDDEESIEEVVEKSED) is disordered. The span at 245 to 254 (ENDDEESIEE) shows a compositional bias: acidic residues.

This sequence belongs to the universal ribosomal protein uS2 family.

In Lactobacillus gasseri (strain ATCC 33323 / DSM 20243 / BCRC 14619 / CIP 102991 / JCM 1131 / KCTC 3163 / NCIMB 11718 / NCTC 13722 / AM63), this protein is Small ribosomal subunit protein uS2.